A 240-amino-acid chain; its full sequence is Transposase for insertion sequence element IS3411 (240 aa).

Residues 125–240 form the Integrase catalytic domain; the sequence is VAERPDQLWV…RASMVFTKRR (116 aa).

Involved in the transposition of the insertion sequence. The polypeptide is Transposase for insertion sequence element IS3411 (Escherichia coli).